The following is a 350-amino-acid chain: Carbamoyl dehydratase HypE (350 aa).

Residue cysteine 350 is modified to S-carbamoylcysteine. Cysteine 350 bears the S-cyanocysteine mark.

The protein belongs to the HypE family. Post-translationally, modified by HypF, which adds a carboxamido group to the thiolate of the C-terminal cysteine, yielding a protein-S-carboxamide. The carboxamido group is then dehydrated by HypE itself to yield a protein-thiocyanate.

It carries out the reaction C-terminal S-carboxamide-L-cysteinyl-[HypE protein] + ATP = C-terminal S-cyanate-L-cysteinyl-[HypE protein] + ADP + phosphate + H(+). It functions in the pathway protein modification; [NiFe] hydrogenase maturation. Functionally, involved in the maturation of [NiFe] hydrogenases. Along with HypF, it catalyzes the synthesis of the CN ligands of the active site iron of [NiFe]-hydrogenases. HypE catalyzes the ATP-dependent dehydration of the carboxamido group attached to its C-terminal cysteine to a cyano group. This Rhizobium leguminosarum bv. viciae protein is Carbamoyl dehydratase HypE.